The following is a 572-amino-acid chain: Urease subunit alpha (572 aa).

A Urease domain is found at 130 to 572 (GGVDTHIHFI…LPMAQRYFLF (443 aa)). Ni(2+) is bound by residues histidine 135, histidine 137, and lysine 218. Lysine 218 is modified (N6-carboxylysine). Histidine 220 is a binding site for substrate. Residues histidine 247 and histidine 273 each contribute to the Ni(2+) site. Histidine 321 functions as the Proton donor in the catalytic mechanism. Aspartate 361 contacts Ni(2+).

This sequence belongs to the metallo-dependent hydrolases superfamily. Urease alpha subunit family. Heterotrimer of UreA (gamma), UreB (beta) and UreC (alpha) subunits. Three heterotrimers associate to form the active enzyme. Ni cation serves as cofactor. Carboxylation allows a single lysine to coordinate two nickel ions.

Its subcellular location is the cytoplasm. The catalysed reaction is urea + 2 H2O + H(+) = hydrogencarbonate + 2 NH4(+). Its pathway is nitrogen metabolism; urea degradation; CO(2) and NH(3) from urea (urease route): step 1/1. This Ralstonia nicotianae (strain ATCC BAA-1114 / GMI1000) (Ralstonia solanacearum) protein is Urease subunit alpha.